A 226-amino-acid chain; its full sequence is tRNA (guanine-N(7)-)-methyltransferase (226 aa).

Residues 1-21 are disordered; it reads MTHPQQPHGPLRSFGRLKSRP. Glu-59, Glu-84, Asp-111, and Asp-133 together coordinate S-adenosyl-L-methionine. Asp-133 is an active-site residue. Lys-137 lines the substrate pocket. Residues 139-144 are interaction with RNA; sequence RHNKRR. Substrate contacts are provided by residues Asp-169 and 206 to 209; that span reads TRYE.

It belongs to the class I-like SAM-binding methyltransferase superfamily. TrmB family.

The catalysed reaction is guanosine(46) in tRNA + S-adenosyl-L-methionine = N(7)-methylguanosine(46) in tRNA + S-adenosyl-L-homocysteine. It participates in tRNA modification; N(7)-methylguanine-tRNA biosynthesis. Catalyzes the formation of N(7)-methylguanine at position 46 (m7G46) in tRNA. The protein is tRNA (guanine-N(7)-)-methyltransferase of Caulobacter sp. (strain K31).